The following is a 28-amino-acid chain: Arylalkyl acylamidase (28 aa).

Homotetramer.

It catalyses the reaction an N-acetylarylalkylamine + H2O = an aralkylamine + acetate. Activated by divalent metal ions. Inhibited by certain thiol reagents. In terms of biological role, shows a strict specificity for N-acetyl arylalkylamines but not acetanilide derivatives. The chain is Arylalkyl acylamidase from Pseudomonas putida (Arthrobacter siderocapsulatus).